The following is a 110-amino-acid chain: Nucleoprotein (110 aa).

Residues Met-1–Tyr-24 form a disordered region.

Belongs to the arteriviridae nucleocapsid family.

It localises to the virion. The sequence is that of Nucleoprotein (N) from Equine arteritis virus (strain Bucyrus) (EAV).